The primary structure comprises 1354 residues: Rho-associated protein kinase 1 (1354 aa).

Residue Ser-2 is modified to N-acetylserine. The 263-residue stretch at 76 to 338 (YEVVKVIGRG…VEEIKRHLFF (263 aa)) folds into the Protein kinase domain. ATP contacts are provided by residues 82–90 (IGRGAFGEV) and Lys-105. The active-site Proton acceptor is the Asp-198. The region spanning 341 to 409 (DQWAWETLRD…YSNRRYLPSA (69 aa)) is the AGC-kinase C-terminal domain. An interaction with FHOD1 region spans residues 368–727 (FDDLEEDKGD…KKLKEEREAR (360 aa)). Positions 422-692 (KSLQESLQKT…RLEQEVNEHK (271 aa)) form a coiled coil. The REM-1 domain maps to 479–556 (SAVSQIEKEK…LEEANDLLRT (78 aa)). The SHROOM3 binding stretch occupies residues 707 to 946 (EAKSVAMCEM…TVSRLEETNS (240 aa)). A RhoBD domain is found at 949–1015 (TKDIEMLRKE…LAEIMNRKDF (67 aa)). An RHOA binding region spans residues 998-1010 (LKTQAVNKLAEIM). The stretch at 1011 to 1102 (NRKDFKIDRK…KLLDLSDSTS (92 aa)) forms a coiled coil. Residues Ser-1105 and Ser-1108 each carry the phosphoserine modification. The auto-inhibitory stretch occupies residues 1115 to 1354 (NLPESRIEGW…VVKNTSGKTS (240 aa)). The region spanning 1118 to 1317 (ESRIEGWLSV…WVTHLVKKIP (200 aa)) is the PH domain. The segment at 1228–1283 (GHEFIPTLYHFPANCEACAKPLWHVFKPPPALECRRCHVKCHRDHLDKKEDLISPC) adopts a Phorbol-ester/DAG-type zinc-finger fold. Ser-1328 is modified (phosphoserine). The interval 1333 to 1354 (STRSTANQSFRKVVKNTSGKTS) is disordered.

This sequence belongs to the protein kinase superfamily. AGC Ser/Thr protein kinase family. Homodimer. Interacts with RHOA (activated by GTP), RHOB, RHOC, GEM, MYLC2B, RHOE, PPP1R12A, LIMK1, LIMK2, TSG101, CHORDC1, DAPK3, PFN1 and JIP3. Interacts with FHOD1 in a Src-dependent manner. Interacts with PTEN. Interacts with ITGB1BP1 (via N-terminus and PTB domain). Interacts with SHROOM3. It depends on Mg(2+) as a cofactor. Autophosphorylated on serine and threonine residues. Post-translationally, cleaved by caspase-3 during apoptosis. This leads to constitutive activation of the kinase and membrane blebbing. In terms of tissue distribution, highly expressed in brain, heart, lung, liver, stomach, spleen, kidney, testis, muscle, embryo and placenta.

Its subcellular location is the cytoplasm. It is found in the cytoskeleton. The protein localises to the microtubule organizing center. It localises to the centrosome. The protein resides in the centriole. Its subcellular location is the golgi apparatus membrane. It is found in the cell projection. The protein localises to the bleb. It localises to the cell membrane. The protein resides in the lamellipodium. Its subcellular location is the ruffle. It catalyses the reaction L-seryl-[protein] + ATP = O-phospho-L-seryl-[protein] + ADP + H(+). The enzyme catalyses L-threonyl-[protein] + ATP = O-phospho-L-threonyl-[protein] + ADP + H(+). Its activity is regulated as follows. Activated by RHOA binding. Inhibited by Y-27632. Protein kinase which is a key regulator of the actin cytoskeleton and cell polarity. Involved in regulation of smooth muscle contraction, actin cytoskeleton organization, stress fiber and focal adhesion formation, neurite retraction, cell adhesion and motility via phosphorylation of DAPK3, GFAP, LIMK1, LIMK2, MYL9/MLC2, TPPP, PFN1 and PPP1R12A. Phosphorylates FHOD1 and acts synergistically with it to promote SRC-dependent non-apoptotic plasma membrane blebbing. Phosphorylates JIP3 and regulates the recruitment of JNK to JIP3 upon UVB-induced stress. Acts as a suppressor of inflammatory cell migration by regulating PTEN phosphorylation and stability. Acts as a negative regulator of VEGF-induced angiogenic endothelial cell activation. Required for centrosome positioning and centrosome-dependent exit from mitosis. Plays a role in terminal erythroid differentiation. Inhibits podocyte motility via regulation of actin cytoskeletal dynamics and phosphorylation of CFL1. Promotes keratinocyte terminal differentiation. Involved in osteoblast compaction through the fibronectin fibrillogenesis cell-mediated matrix assembly process, essential for osteoblast mineralization. May regulate closure of the eyelids and ventral body wall by inducing the assembly of actomyosin bundles. The polypeptide is Rho-associated protein kinase 1 (Rock1) (Mus musculus (Mouse)).